Reading from the N-terminus, the 423-residue chain is Glycine amidinotransferase, mitochondrial (423 aa).

The transit peptide at Met1–Thr43 directs the protein to the mitochondrion. A phosphoserine mark is found at Ser46 and Ser49. Asp170 is an arginine binding site. Residues Asp254 and His303 contribute to the active site. 4 residues coordinate arginine: Asp305, Arg322, Ser354, and Ser355. The residue at position 385 (Lys385) is an N6-acetyllysine. The active-site Amidino-cysteine intermediate is Cys407.

Belongs to the amidinotransferase family. In terms of assembly, homodimer. There is an equilibrium between the monomeric and dimeric forms, shifted towards the side of the monomer. Expressed in brain, heart, kidney, liver, lung, salivary gland and skeletal muscle tissue, with the highest expression in kidney. Biallelically expressed in placenta and fetal tissues.

It is found in the mitochondrion inner membrane. It localises to the cytoplasm. The enzyme catalyses L-arginine + glycine = guanidinoacetate + L-ornithine. It catalyses the reaction 4-aminobutanoate + L-arginine = 4-guanidinobutanoate + L-ornithine. It carries out the reaction beta-alanine + L-arginine = 3-guanidinopropanoate + L-ornithine. The catalysed reaction is taurine + L-arginine = taurocyamine + L-ornithine. Its pathway is amine and polyamine biosynthesis; creatine biosynthesis; creatine from L-arginine and glycine: step 1/2. Transamidinase that catalyzes the transfer of the amidino group of L-arginine onto the amino moiety of acceptor metabolites such as glycine, beta-alanine, gamma-aminobutyric acid (GABA) and taurine yielding the corresponding guanidine derivatives. Catalyzes the rate-limiting step of creatine biosynthesis, namely the transfer of the amidino group from L-arginine to glycine to generate guanidinoacetate, which is then methylated by GAMT to form creatine. Provides creatine as a source for ATP generation in tissues with high energy demands, in particular skeletal muscle, heart and brain. The polypeptide is Glycine amidinotransferase, mitochondrial (GATM) (Homo sapiens (Human)).